A 317-amino-acid chain; its full sequence is MEQLRGLYPPLAAYDSGWLDTGDGHRIYWELSGNPNGKPAVFIHGGPGGGISPHHRQLFDPERYKVLLFDQRGCGRSRPHASLDNNTTWHLVADIERLREMAGVEQWLVFGGSWGSTLALAYAQTHPERVSEMVLRGIFTLRKQRLHWYYQDGASRFFPEKWERVLSILSDDERKDVIAAYRQRLTSADPQVQLEAAKLWSVWEGETVTLLPSRESASFGEDDFALAFARIENHYFTHLGFLESDDQLLRNVPLIRHIPAVIVHGRYDMACQVQNAWDLAKAWPEAELHIVEGAGHSYDEPGILHQLMIATDRFAGK.

Residues 41 to 296 (VFIHGGPGGG…ELHIVEGAGH (256 aa)) form the AB hydrolase-1 domain. The active-site Nucleophile is the serine 113. Aspartate 268 is an active-site residue. Histidine 296 acts as the Proton donor in catalysis.

This sequence belongs to the peptidase S33 family. In terms of assembly, monomer.

The protein localises to the cytoplasm. The enzyme catalyses Release of N-terminal proline from a peptide.. Its function is as follows. Specifically catalyzes the removal of N-terminal proline residues from peptides. The chain is Proline iminopeptidase (pip) from Serratia marcescens.